Consider the following 623-residue polypeptide: Transketolase (623 aa).

An N-acetylmethionine modification is found at M1. 2 positions are modified to N6-acetyllysine: K6 and K11. Position 37 (H37) interacts with substrate. Thiamine diphosphate contacts are provided by S40 and H77. S104 is subject to Phosphoserine. 123-125 (GSL) lines the thiamine diphosphate pocket. At K144 the chain carries N6-acetyllysine. A Mg(2+)-binding site is contributed by D155. 2 residues coordinate thiamine diphosphate: G156 and N185. Mg(2+) contacts are provided by N185 and L187. An N6-acetyllysine mark is found at K204, K232, and K241. K244 and H258 together coordinate thiamine diphosphate. H258 is a substrate binding site. K260 carries the post-translational modification N6-acetyllysine. Y275 is modified (phosphotyrosine). T287 is subject to Phosphothreonine. S295 carries the phosphoserine modification. R318 and S345 together coordinate substrate. S345 bears the Phosphoserine mark. Residue K352 forms a Glycyl lysine isopeptide (Lys-Gly) (interchain with G-Cter in SUMO2) linkage. Residue E366 is the Proton donor of the active site. F392 provides a ligand contact to thiamine diphosphate. Substrate contacts are provided by H416 and D424. Residue Q428 participates in thiamine diphosphate binding. R474 serves as a coordination point for substrate. K538 and K603 each carry N6-acetyllysine.

It belongs to the transketolase family. In terms of assembly, homodimer. Mg(2+) serves as cofactor. The cofactor is Ca(2+). Requires Mn(2+) as cofactor. It depends on Co(2+) as a cofactor. Thiamine diphosphate is required as a cofactor.

The catalysed reaction is D-sedoheptulose 7-phosphate + D-glyceraldehyde 3-phosphate = aldehydo-D-ribose 5-phosphate + D-xylulose 5-phosphate. In terms of biological role, catalyzes the transfer of a two-carbon ketol group from a ketose donor to an aldose acceptor, via a covalent intermediate with the cofactor thiamine pyrophosphate. In Mus musculus (Mouse), this protein is Transketolase (Tkt).